The following is a 138-amino-acid chain: Fluoride-specific ion channel FluC (138 aa).

4 helical membrane-spanning segments follow: residues 34 to 54, 60 to 80, 88 to 108, and 112 to 132; these read FMPK…GACA, MQFG…SFLM, FWGT…VVLV, and LPHA…AWLM. Residues glycine 95 and threonine 98 each coordinate Na(+).

It belongs to the fluoride channel Fluc/FEX (TC 1.A.43) family.

The protein resides in the cell membrane. The catalysed reaction is fluoride(in) = fluoride(out). With respect to regulation, na(+) is not transported, but it plays an essential structural role and its presence is essential for fluoride channel function. In terms of biological role, fluoride-specific ion channel. Important for reducing fluoride concentration in the cell, thus reducing its toxicity. The protein is Fluoride-specific ion channel FluC of Corynebacterium efficiens (strain DSM 44549 / YS-314 / AJ 12310 / JCM 11189 / NBRC 100395).